We begin with the raw amino-acid sequence, 570 residues long: Rqc2 homolog RqcH (570 aa).

The tract at residues 1 to 173 (MSFDGMFTYG…LPPAQDKISP (173 aa)) is NFACT-N domain. Positions 179–281 (DDILRHLSFQ…ELLDRFYFGK (103 aa)) are hhH domain. Coiled-coil stretches lie at residues 279 to 336 (FGKA…TANL) and 368 to 430 (TPSE…VEGK). A coiled-coil-M (CCM) region spans residues 282-434 (AERDRVKQQA…ELVEGKYLRP (153 aa)). Positions 446 to 570 (HNPVLETYES…ADTVIKLKKS (125 aa)) are NFACT-R.

Belongs to the NEMF family. As to quaternary structure, associates with isolated or stalled 50S ribosomal subunits. Binds to RqcP. Interacts with ribosomal protein uL11. Displaced from the 50S subunit by thiostrepton. In crystallized 50S subunits RqcH is variously associated with A/P-site tRNA, P-site tRNA and RqcP, an E-site tRNA or A- and P-site tRNAs and RqcP2(YlmH).

In terms of biological role, key component of the ribosome quality control system (RQC), a ribosome-associated complex that mediates the extraction of incompletely synthesized nascent chains from stalled ribosomes and their subsequent degradation. RqcH recruits Ala-charged tRNA, and with RqcP directs the elongation of stalled nascent chains on 50S ribosomal subunits, leading to non-templated C-terminal alanine extensions (Ala tail). The Ala tail promotes nascent chain degradation. RqcH, RqcP and charged tRNA(Ala) are necessary and sufficient to add an Ala tail to a model stalled nascent peptide; does not add Val. Binds the P-site tRNA in 50S ribosomal subunit, unwinds the anticodon stem and interacts with the splayed anticodon. Selectively binds tRNA(Ala) isoacceptors, even in the absence of the 50S ribosomal subunit. Adds between 1 and at least 8 Ala residues to the nascent chain; detection of the Ala tail requires either deletion of clpP or its inhibition. Binds to 50S ribosomal subunits, at least 30% of which contain a P-site tRNA and thus are obstructed. The sequence is that of Rqc2 homolog RqcH from Bacillus subtilis (strain 168).